We begin with the raw amino-acid sequence, 448 residues long: Glutamate--tRNA ligase (448 aa).

The short motif at 10–20 (PSPTGFLHIGN) is the 'HIGH' region element. The 'KMSKS' region signature appears at 214 to 218 (KLSKR). Position 217 (Lys217) interacts with ATP.

It belongs to the class-I aminoacyl-tRNA synthetase family. Glutamate--tRNA ligase type 1 subfamily. In terms of assembly, monomer.

It is found in the cytoplasm. It catalyses the reaction tRNA(Glu) + L-glutamate + ATP = L-glutamyl-tRNA(Glu) + AMP + diphosphate. Functionally, catalyzes the attachment of glutamate to tRNA(Glu) in a two-step reaction: glutamate is first activated by ATP to form Glu-AMP and then transferred to the acceptor end of tRNA(Glu). The chain is Glutamate--tRNA ligase from Phytoplasma australiense.